A 763-amino-acid chain; its full sequence is 1,4-alpha-glucan branching enzyme GlgB (763 aa).

The Nucleophile role is filled by D437. Residue E488 is the Proton donor of the active site.

The protein belongs to the glycosyl hydrolase 13 family. GlgB subfamily. As to quaternary structure, monomer.

The catalysed reaction is Transfers a segment of a (1-&gt;4)-alpha-D-glucan chain to a primary hydroxy group in a similar glucan chain.. Its pathway is glycan biosynthesis; glycogen biosynthesis. Functionally, catalyzes the formation of the alpha-1,6-glucosidic linkages in glycogen by scission of a 1,4-alpha-linked oligosaccharide from growing alpha-1,4-glucan chains and the subsequent attachment of the oligosaccharide to the alpha-1,6 position. This chain is 1,4-alpha-glucan branching enzyme GlgB, found in Synechococcus sp. (strain JA-2-3B'a(2-13)) (Cyanobacteria bacterium Yellowstone B-Prime).